Here is a 303-residue protein sequence, read N- to C-terminus: Phosphatidylglycerol--prolipoprotein diacylglyceryl transferase (303 aa).

A run of 3 helical transmembrane segments spans residues V18–L38, L58–E78, and W107–F127. An a 1,2-diacyl-sn-glycero-3-phospho-(1'-sn-glycerol)-binding site is contributed by R154. Transmembrane regions (helical) follow at residues P193–I213 and I266–Y286.

It belongs to the Lgt family.

It is found in the cell inner membrane. It catalyses the reaction L-cysteinyl-[prolipoprotein] + a 1,2-diacyl-sn-glycero-3-phospho-(1'-sn-glycerol) = an S-1,2-diacyl-sn-glyceryl-L-cysteinyl-[prolipoprotein] + sn-glycerol 1-phosphate + H(+). Its pathway is protein modification; lipoprotein biosynthesis (diacylglyceryl transfer). Catalyzes the transfer of the diacylglyceryl group from phosphatidylglycerol to the sulfhydryl group of the N-terminal cysteine of a prolipoprotein, the first step in the formation of mature lipoproteins. This is Phosphatidylglycerol--prolipoprotein diacylglyceryl transferase from Prochlorococcus marinus (strain MIT 9211).